Consider the following 174-residue polypeptide: UPF0340 protein SAB1998c (174 aa).

It belongs to the UPF0340 family.

This is UPF0340 protein SAB1998c from Staphylococcus aureus (strain bovine RF122 / ET3-1).